The primary structure comprises 246 residues: E3 ubiquitin-protein ligase MARCHF2 (246 aa).

The RING-CH-type zinc finger occupies 56 to 116 (DTPSDCPFCR…ELCHTEFAVE (61 aa)). Residues C64, C67, C80, C82, H90, C93, C106, and C109 each contribute to the Zn(2+) site. The required for interaction with IKBKG stretch occupies residues 121–246 (PLTEWLKDPG…LKKVAEETPV (126 aa)). The next 2 helical transmembrane spans lie at 138–158 (LCCDMVCFVFITPLAAISGWL) and 175–195 (AVGLIALTIALFTIYVLWTLV).

Interacts with STX6; the interaction promotes MARCHF2-mediated ubiquitination and degradation of CFTR. Interacts with MARCHF3. Interacts with GOPC/CAL; the interaction leads to CFTR ubiquitination and degradation. Interacts with CFTR; the interaction leads to CFTR ubiqtuitination and degradation. Interacts (via PDZ domain) with DLG1 (via PDZ domains); the interaction leads to DLG1 ubiqtuitination and degradation. Interacts with ERGIC3. Interacts with ADRB2. Interacts with IKBKG/NEMO; during the late stages of macrophage viral and bacterial infection; the interaction leads to ubiquitination and degradation of IKBKG/NEMO. Ubiquitously expressed. Present in liver (at protein level).

Its subcellular location is the endoplasmic reticulum membrane. The protein localises to the lysosome membrane. It localises to the endosome membrane. It is found in the golgi apparatus membrane. The protein resides in the cytoplasm. Its subcellular location is the cell membrane. It catalyses the reaction S-ubiquitinyl-[E2 ubiquitin-conjugating enzyme]-L-cysteine + [acceptor protein]-L-lysine = [E2 ubiquitin-conjugating enzyme]-L-cysteine + N(6)-ubiquitinyl-[acceptor protein]-L-lysine.. It functions in the pathway protein modification; protein ubiquitination. Functionally, E3 ubiquitin-protein ligase that may mediate ubiquitination of TFRC and CD86, and promote their subsequent endocytosis and sorting to lysosomes via multivesicular bodies. E3 ubiquitin ligases accept ubiquitin from an E2 ubiquitin-conjugating enzyme in the form of a thioester and then directly transfer the ubiquitin to targeted substrates. Together with GOPC/CAL mediates the ubiquitination and lysosomal degradation of CFTR. Ubiquitinates and therefore mediates the degradation of DLG1. Regulates the intracellular trafficking and secretion of alpha1-antitrypsin/SERPINA1 and HP/haptoglobin via ubiquitination and degradation of the cargo receptor ERGIC3. Negatively regulates the antiviral and antibacterial immune response by repression of the NF-kB and type 1 IFN signaling pathways, via MARCHF2-mediated K48-linked polyubiquitination of IKBKG/NEMO, resulting in its proteasomal degradation. May be involved in endosomal trafficking through interaction with STX6. The chain is E3 ubiquitin-protein ligase MARCHF2 (Marchf2) from Rattus norvegicus (Rat).